The primary structure comprises 1789 residues: Protein sprint (1789 aa).

6 disordered regions span residues 53–120 (TTAN…AHPP), 140–190 (TTTA…DLAN), 218–237 (PLWN…HPTG), 261–317 (QRMH…QAGL), 329–378 (LNNN…DADD), and 401–460 (RRSR…PCDL). Low complexity predominate over residues 82 to 114 (SINNNKNNNISNKNNNNNNNNNNNINNNNNNNN). The segment covering 140–149 (TTTANQLQQQ) has biased composition (polar residues). A compositionally biased stretch (acidic residues) spans 176–185 (PSEEDGDTDA). Residues 223 to 233 (RNGNGSTTTHC) are compositionally biased toward polar residues. Positions 295-317 (NNNNINNNHNGQQSQKSQQQAGL) are enriched in low complexity. Positions 337–361 (QPGSMTPASNRTGLDSNQNQKQNLN) are enriched in polar residues. Over residues 409–418 (QSRTSLVSSS) the composition is skewed to low complexity. The span at 428–445 (TSSEDDEEEPVEAEDEGE) shows a compositional bias: acidic residues. The SH2 domain occupies 473–566 (WFLPGIQRSG…ELPVQLMLPR (94 aa)). Disordered regions lie at residues 632–689 (FFSD…SGGQ), 744–787 (TAPE…SANG), 852–918 (GECK…ILES), 969–1006 (DLLA…QSLL), 1040–1067 (AAED…QGSP), 1094–1123 (RSQM…MLQP), and 1138–1160 (PKPK…KRAR). The segment covering 639–649 (KPPPTGAPPLP) has biased composition (pro residues). Positions 671-686 (TPSDTTNSSLSSFTTS) are enriched in low complexity. The segment covering 857–868 (TLSSQGSSSNDS) has biased composition (polar residues). Residues 903–914 (AGKESQHYKESD) show a composition bias toward basic and acidic residues. The span at 974–984 (TPSTPTPTQQS) shows a compositional bias: low complexity. Polar residues-rich tracts occupy residues 994–1006 (TATP…QSLL) and 1048–1065 (TTPT…SKQG). Residues 1143-1154 (SQQQQQSQQQQQ) show a composition bias toward low complexity. Residues 1531 to 1673 (RSEDIQLLAQ…LKTFMASEGE (143 aa)) enclose the VPS9 domain. Positions 1689–1777 (CSSVLRVIIP…CMLAYKRIDA (89 aa)) constitute a Ras-associating domain.

This sequence belongs to the RIN (Ras interaction/interference) family. In terms of tissue distribution, in late cellular blastoderm embryos, it is expressed in the posterior end. Then, as development proceeds, it is expressed in the developing midgut, amnioserosa and in a specific subset of CNS neurons. Isoform 1 is expressed earlier in developing midgut and amnioserosa, but is not expressed in the CNS.

Potential Ras effector protein. May function as a guanine nucleotide exchange (GEF), by exchanging bound GDP for free GTP. In Drosophila melanogaster (Fruit fly), this protein is Protein sprint (spri).